Here is a 140-residue protein sequence, read N- to C-terminus: Small ribosomal subunit protein uS19 (140 aa).

This sequence belongs to the universal ribosomal protein uS19 family.

In terms of biological role, protein S19 forms a complex with S13 that binds strongly to the 16S ribosomal RNA. The sequence is that of Small ribosomal subunit protein uS19 from Metallosphaera sedula (strain ATCC 51363 / DSM 5348 / JCM 9185 / NBRC 15509 / TH2).